A 124-amino-acid chain; its full sequence is Transmembrane protein 141 (124 aa).

The next 2 helical transmembrane spans lie at 29–48 and 60–78; these read YAFM…IFFG and LQWN…SYSV. Residues 97–124 form a disordered region; it reads NIPDRNSDKEEPETSADSTTTQHEDVLE.

This sequence belongs to the TMEM141 family.

It localises to the membrane. In Danio rerio (Zebrafish), this protein is Transmembrane protein 141 (tmem141).